We begin with the raw amino-acid sequence, 210 residues long: uncharacterized protein (210 aa).

Transmembrane regions (helical) follow at residues 42–62 (ITLG…VLFV), 66–86 (ALHG…GFLM), 126–146 (VVVY…EMWQ), 147–167 (IILA…VISL), and 189–209 (AGIV…NEII).

This sequence belongs to the Rht family.

The protein localises to the cell membrane. This is an uncharacterized protein from Haemophilus influenzae (strain ATCC 51907 / DSM 11121 / KW20 / Rd).